Consider the following 809-residue polypeptide: Leucine-rich repeat and calponin homology domain-containing protein (809 aa).

The disordered stretch occupies residues 27 to 53; sequence GSASLPGSGTGSGSGIGHAGNTSSSTS. The span at 34 to 44 shows a compositional bias: gly residues; sequence SGTGSGSGIGH. LRR repeat units follow at residues 72 to 96, 98 to 121, 122 to 144, 145 to 168, 170 to 189, 191 to 213, 214 to 236, 238 to 258, and 260 to 282; these read EAHFSGELILTNRKLKDFPRTGTKY, LTDTVIADLSRNRFAELPEEVTTF, AFLETLLLYHNTIRSIPESVKQL, SSLTYLDLRSNQLSSLPREICFLP, QVLLVSNNRLTSLPDELGRL, QTLTDLDASYNQLANLPARLGEL, RSLRSLSLRSNHLLYLPRELTCL, LISLDVSNNKIASLPLEIRHM, and TLVELQLENNPLTSPPASLCMRG. Disordered stretches follow at residues 295-373, 423-442, and 490-550; these read TKDE…LHCV, LSYAHSNSSSNGSSPDQDDD, and KHPN…VDDV. Over residues 319–336 the composition is skewed to polar residues; sequence HNSSGNVLEASTTGSTNN. Residues 351 to 368 are compositionally biased toward basic and acidic residues; that stretch reads GLDKRWSHDAPTKSKTDS. Residues 518 to 532 are compositionally biased toward polar residues; it reads NTLPKSIMKQNSNQI. In terms of domain architecture, Calponin-homology (CH) spans 662–776; sequence QREETELMSQ…TVGELFRLHG (115 aa). The interval 783 to 809 is disordered; the sequence is GNSSGAATPTKSPTRTTRATMSPTPLA. Residues 788–809 are compositionally biased toward polar residues; sequence AATPTKSPTRTTRATMSPTPLA.

It is found in the cytoplasm. It localises to the cytoskeleton. Its subcellular location is the cell cortex. The protein resides in the cleavage furrow. In terms of biological role, may play a role in the stabilization of the actin-rich cell cortex during cell division. The sequence is that of Leucine-rich repeat and calponin homology domain-containing protein from Drosophila melanogaster (Fruit fly).